Reading from the N-terminus, the 172-residue chain is Shikimate kinase (172 aa).

Residue 14–19 participates in ATP binding; sequence GAGKST. S18 contributes to the Mg(2+) binding site. Substrate is bound by residues D36, R60, and G82. An ATP-binding site is contributed by R120. Residue R139 coordinates substrate. Q156 is an ATP binding site.

This sequence belongs to the shikimate kinase family. Monomer. Mg(2+) is required as a cofactor.

It localises to the cytoplasm. The catalysed reaction is shikimate + ATP = 3-phosphoshikimate + ADP + H(+). It functions in the pathway metabolic intermediate biosynthesis; chorismate biosynthesis; chorismate from D-erythrose 4-phosphate and phosphoenolpyruvate: step 5/7. Functionally, catalyzes the specific phosphorylation of the 3-hydroxyl group of shikimic acid using ATP as a cosubstrate. This Vibrio campbellii (strain ATCC BAA-1116) protein is Shikimate kinase.